Reading from the N-terminus, the 1515-residue chain is Adhesion G protein-coupled receptor L1 (1515 aa).

The N-terminal stretch at 1–24 is a signal peptide; the sequence is MARLAAALWSLCVTTVLVTSATQG. Over 25 to 857 the chain is Extracellular; that stretch reads LSRAGLPFGL…EIYQGRINEL (833 aa). Residues 40–129 enclose the SUEL-type lectin domain; that stretch reads ACEGYPIELR…KYLEVQYDCV (90 aa). 5 disulfide bridges follow: C41–C71, C50–C128, C83–C115, C96–C102, and C140–C322. E42 contacts alpha-L-rhamnose. A glycan (N-linked (GlcNAc...) asparagine) is linked at N98. 117-120 is an alpha-L-rhamnose binding site; the sequence is GTYK. The region spanning 139 to 398 is the Olfactomedin-like domain; it reads VCPGTLQKVL…VVRYSLEFGP (260 aa). Residues 400-468 are disordered; the sequence is DPSAGPATSP…APAPSTRRPP (69 aa). Over residues 405 to 441 the composition is skewed to low complexity; it reads PATSPPLSTTTTARPTPLTSTASPAATTPLRRAPLTT. Over residues 453–468 the composition is skewed to pro residues; the sequence is DLPPATAPAPSTRRPP. 2 disulfide bridges follow: C480-C515 and C503-C532. N531, N640, N741, N800, N805, and N826 each carry an N-linked (GlcNAc...) asparagine glycan. Residues 669–850 enclose the GAIN-B domain; it reads PARFLAAKQN…AVLMAHREIY (182 aa). 2 cysteine pairs are disulfide-bonded: C801–C832 and C820–C834. The tract at residues 801-850 is GPS; that stretch reads CSFWNYSERSMLGYWSTQGCRLVESNKTHTTCACSHLTNFAVLMAHREIY. Residues 858–878 traverse the membrane as a helical segment; it reads LLSVITWVGIVISLVCLAICI. Topologically, residues 879–892 are cytoplasmic; sequence STFCFLRGLQTDRN. A helical membrane pass occupies residues 893–913; it reads TIHKNLCINLFLAELLFLVGI. Residues 914–919 are Extracellular-facing; that stretch reads DKTQYE. Residues 920–940 traverse the membrane as a helical segment; that stretch reads VACPIFAGLLHYFFLAAFSWL. At 941-964 the chain is on the cytoplasmic side; sequence CLEGVHLYLLLVEVFESEYSRTKY. Residues 965 to 985 form a helical membrane-spanning segment; the sequence is YYLGGYCFPALVVGIAAAIDY. Residues 986–1001 lie on the Extracellular side of the membrane; sequence RSYGTEKACWLRVDNY. The chain crosses the membrane as a helical span at residues 1002–1022; it reads FIWSFIGPVSFVIVVNLVFLM. Over 1023–1049 the chain is Cytoplasmic; sequence VTLHKMIRSSSVLKPDSSRLDNIKSWA. A helical transmembrane segment spans residues 1050 to 1070; sequence LGAIALLFLLGLTWAFGLLFI. Residues 1071–1074 lie on the Extracellular side of the membrane; the sequence is NKES. A helical membrane pass occupies residues 1075-1095; that stretch reads VVMAYLFTTFNAFQGVFIFVF. Residues 1096-1515 are Cytoplasmic-facing; sequence HCALQKKVHK…DGQMQLVTSL (420 aa). A disordered region spans residues 1144 to 1184; the sequence is TQVPGQGRHIHQVSLGPRGRSALPESQKDPGGQSGPGDPLT. An Omega-N-methylarginine modification is found at R1237. A Phosphoserine modification is found at S1263. Disordered stretches follow at residues 1291 to 1316, 1337 to 1369, 1401 to 1470, and 1492 to 1515; these read FNNS…RGRN, RGAS…PGGA, ESES…SRPP, and YLAA…VTSL. Pro residues-rich tracts occupy residues 1345-1356 and 1449-1461; these read GPPPEPPVPPVP and ALPP…PGPP. 2 positions are modified to phosphoserine: S1497 and S1514.

The protein belongs to the G-protein coupled receptor 2 family. Adhesion G-protein coupled receptor (ADGR) subfamily. As to quaternary structure, forms a heterodimer, consisting of a large extracellular region (p120) non-covalently linked to a seven-transmembrane moiety (p85). Interacts with syntaxin and with proteins of the SHANK family via the PDZ domain. Isoform 2 interacts with TENM2. Interacts (via extracellular domain) with FLRT1, FLRT2 and FLRT3 (via extracellular domain). In terms of processing, autoproteolytically cleaved into 2 subunits, an extracellular subunit and a seven-transmembrane subunit. This proteolytic processing takes place early in the biosynthetic pathway, either in the endoplasmic reticulum or in the early compartment of the Golgi apparatus. Expressed in the brain (at protein level). Brain specific distribution but low levels are also detected in most tissues.

It localises to the cell membrane. The protein resides in the cell projection. The protein localises to the axon. It is found in the growth cone. Its subcellular location is the synapse. It localises to the presynaptic cell membrane. The protein resides in the synaptosome. Functionally, calcium-independent receptor of high affinity for alpha-latrotoxin, an excitatory neurotoxin present in black widow spider venom which triggers massive exocytosis from neurons and neuroendocrine cells. Receptor probably implicated in the regulation of exocytosis. Receptor for TENM2 that mediates heterophilic synaptic cell-cell contact and postsynaptic specialization. This Rattus norvegicus (Rat) protein is Adhesion G protein-coupled receptor L1.